Here is a 453-residue protein sequence, read N- to C-terminus: GTPase Der (453 aa).

EngA-type G domains are found at residues 4–169 (PIVA…SETP) and 177–352 (IKVA…RQFE). Residues 10-17 (GRPNVGKS), 57-61 (DTGGL), 120-123 (NKCE), 183-190 (GRPNVGKS), 230-234 (DTAGI), and 295-298 (NKWD) contribute to the GTP site. In terms of domain architecture, KH-like spans 353-438 (QRVTTSVINE…PIRLLWRGKK (86 aa)).

The protein belongs to the TRAFAC class TrmE-Era-EngA-EngB-Septin-like GTPase superfamily. EngA (Der) GTPase family. As to quaternary structure, associates with the 50S ribosomal subunit.

In terms of biological role, GTPase that plays an essential role in the late steps of ribosome biogenesis. The chain is GTPase Der from Acaryochloris marina (strain MBIC 11017).